Consider the following 438-residue polypeptide: 3-phosphoshikimate 1-carboxyvinyltransferase 1 (438 aa).

3-phosphoshikimate contacts are provided by lysine 30, serine 31, and arginine 35. Lysine 30 contributes to the phosphoenolpyruvate binding site. Residues glycine 104 and arginine 132 each coordinate phosphoenolpyruvate. 6 residues coordinate 3-phosphoshikimate: serine 178, serine 179, glutamine 180, serine 207, glutamate 326, and histidine 353. Glutamine 180 serves as a coordination point for phosphoenolpyruvate. Glutamate 326 acts as the Proton acceptor in catalysis. Phosphoenolpyruvate is bound by residues arginine 357, arginine 398, and lysine 423.

This sequence belongs to the EPSP synthase family. As to quaternary structure, monomer.

Its subcellular location is the cytoplasm. It catalyses the reaction 3-phosphoshikimate + phosphoenolpyruvate = 5-O-(1-carboxyvinyl)-3-phosphoshikimate + phosphate. Its pathway is metabolic intermediate biosynthesis; chorismate biosynthesis; chorismate from D-erythrose 4-phosphate and phosphoenolpyruvate: step 6/7. In terms of biological role, catalyzes the transfer of the enolpyruvyl moiety of phosphoenolpyruvate (PEP) to the 5-hydroxyl of shikimate-3-phosphate (S3P) to produce enolpyruvyl shikimate-3-phosphate and inorganic phosphate. This chain is 3-phosphoshikimate 1-carboxyvinyltransferase 1, found in Streptomyces coelicolor (strain ATCC BAA-471 / A3(2) / M145).